The following is a 147-amino-acid chain: Ribosomal RNA large subunit methyltransferase H (147 aa).

S-adenosyl-L-methionine contacts are provided by residues Leu-66, Gly-95, and 114–119 (LSELTF).

This sequence belongs to the RNA methyltransferase RlmH family. In terms of assembly, homodimer.

Its subcellular location is the cytoplasm. The enzyme catalyses pseudouridine(1915) in 23S rRNA + S-adenosyl-L-methionine = N(3)-methylpseudouridine(1915) in 23S rRNA + S-adenosyl-L-homocysteine + H(+). Functionally, specifically methylates the pseudouridine at position 1915 (m3Psi1915) in 23S rRNA. This Synechococcus sp. (strain RCC307) protein is Ribosomal RNA large subunit methyltransferase H.